The sequence spans 661 residues: Chermesin D/asnovolin J monooxidase nvfH (661 aa).

Residue Asn12 is glycosylated (N-linked (GlcNAc...) asparagine). A helical transmembrane segment spans residues 89–111 (VLIIGAGYGGLLFAVRIIQTGAF). Residues 128–131 (TWYW), 140–141 (DV), and Tyr146 contribute to the FAD site. Residue 138–140 (MCD) coordinates NADP(+). NADP(+) is bound by residues 286–292 (TGATAIQ) and 309–310 (RT). 2 N-linked (GlcNAc...) asparagine glycosylation sites follow: Asn382 and Asn538.

This sequence belongs to the FAD-binding monooxygenase family. It depends on FAD as a cofactor.

The protein resides in the membrane. The catalysed reaction is chermesin D + AH2 + O2 = asnovolin I + A + H2O. It carries out the reaction asnovolin J + AH2 + O2 = asnovolin A + A + H2O. The protein operates within secondary metabolite biosynthesis; terpenoid biosynthesis. Functionally, chermesin D/asnovolin J monooxidase; part of the gene cluster that mediates the biosynthesis of novofumigatonin, a heavily oxygenated meroterpenoid containing a unique orthoester moiety. The first step of the pathway is the synthesis of 3,5-dimethylorsellinic acid (DMOA) by the polyketide synthase nvfA via condensation of one acetyl-CoA starter unit with 3 malonyl-CoA units and 2 methylations. DMOA is then converted to farnesyl-DMOA by the farnesyltransferase nvfB. Epoxydation by FAD-dependent monooxygenase nvfK, followed by a protonation-initiated cyclization catalyzed by the terpene cyclase nvfL leads to the production of asnavolin H. The short chain dehydrogenase nvfC then as a 3-OH dehydrogenase of asnovolin H to yield chemesin D. There are two branches to synthesize asnovolin A from chemesin D. In one branch, chemesin D undergoes Baeyer-Villiger oxidation by nvfH, methylation by nvfJ, and enoyl reduction by the nvfM D enoylreductase that reduces the double bond between C-5'and C-6', to form respectively asnovolin I, asnovolin K, and asnovolin A. In the other branch, the methylation precedes the Baeyer-Villiger oxidation and the enoyl reduction to yield asnovolin A via the asnovolin J intermediate. Asnovolin A is further converted to fumigatonoid A by the Fe(II)/2-oxoglutarate-dependent dioxygenase nvfI that catalyzes an endoperoxidation reaction. The alpha/beta hydrolase nvfD then acts as an epimerase that converts fumigatonoid A to its C-5' epimer, which then undergoes spontaneous or nvfD-catalyzed lactonization. The following step utilizes the ketoreductase nvfG to produce fumigatonoid B. The dioxygenase nvfE further converts fumigatonoid B into fumigatonoid C. Finally the Fe(II)/2-oxoglutarate-dependent dioxygenase nvfF catalyzes two rounds of oxidation to transform fumigatonoid C into the end product, novofumigatonin A. This chain is Chermesin D/asnovolin J monooxidase nvfH, found in Aspergillus novofumigatus (strain IBT 16806).